The chain runs to 324 residues: UDP-N-acetylenolpyruvoylglucosamine reductase (324 aa).

Positions 36-203 constitute an FAD-binding PCMH-type domain; that stretch reads FRAGGLAELM…TSVLFEGYPE (168 aa). The active site involves Arg-183. The active-site Proton donor is Ser-232. The active site involves Glu-302.

It belongs to the MurB family. FAD serves as cofactor.

It is found in the cytoplasm. It catalyses the reaction UDP-N-acetyl-alpha-D-muramate + NADP(+) = UDP-N-acetyl-3-O-(1-carboxyvinyl)-alpha-D-glucosamine + NADPH + H(+). Its pathway is cell wall biogenesis; peptidoglycan biosynthesis. Cell wall formation. This chain is UDP-N-acetylenolpyruvoylglucosamine reductase, found in Rhizobium johnstonii (strain DSM 114642 / LMG 32736 / 3841) (Rhizobium leguminosarum bv. viciae).